The sequence spans 133 residues: Inhibitor of g-type lysozyme (133 aa).

The signal sequence occupies residues 1–22 (MKIKSIRKAVLLLALLTSTSFA).

It localises to the periplasm. Its function is as follows. Inhibits activity of g-type lysozyme, which confers increased lysozyme tolerance to the bacterium. The chain is Inhibitor of g-type lysozyme (pliG) from Escherichia coli (strain K12).